The following is a 379-amino-acid chain: MKHLALIGSTGSIGRQVLQVVRSIPDTFIIETLAAYGRNQEALISQIREFNPRVVAVREETTYKELRKLFPHIEILLGEEGLVSVATEPSVTITIVASSGIDALPAVIAAIRQKKTIALANKESLVAAGELVTTLARENGVQILPIDSEHNALFQCLEGRDSSTIKKLLLTASGGPLRNKSKEELQKVSLQEVLRHPVWNMGPKITVDSSTLVNKGLEIIEAFWLFGLEAVEIEAVIHPQSLVHGMVEFCDGTILSVMKPPSMLFPIQHVLTFPERSPAIGPGFDFLSNRTLEFFPIDEDRFPSVHLAKRVLLEKGSMGCFFNGANEALVHRFLAGEISWHQIVPKLQALVDQHRVQSCLSLEEILSVDAEARARAQEC.

T10, G11, S12, I13, R38, N39, and N121 together coordinate NADPH. K122 is a binding site for 1-deoxy-D-xylulose 5-phosphate. E123 serves as a coordination point for NADPH. Position 147 (D147) interacts with Mn(2+). The 1-deoxy-D-xylulose 5-phosphate site is built by S148, E149, S173, and H196. Position 149 (E149) interacts with Mn(2+). G202 contributes to the NADPH binding site. The 1-deoxy-D-xylulose 5-phosphate site is built by S209, N214, K215, and E218. E218 lines the Mn(2+) pocket.

It belongs to the DXR family. The cofactor is Mg(2+). Mn(2+) is required as a cofactor.

It carries out the reaction 2-C-methyl-D-erythritol 4-phosphate + NADP(+) = 1-deoxy-D-xylulose 5-phosphate + NADPH + H(+). It functions in the pathway isoprenoid biosynthesis; isopentenyl diphosphate biosynthesis via DXP pathway; isopentenyl diphosphate from 1-deoxy-D-xylulose 5-phosphate: step 1/6. Catalyzes the NADPH-dependent rearrangement and reduction of 1-deoxy-D-xylulose-5-phosphate (DXP) to 2-C-methyl-D-erythritol 4-phosphate (MEP). The polypeptide is 1-deoxy-D-xylulose 5-phosphate reductoisomerase (Chlamydia trachomatis serovar L2 (strain ATCC VR-902B / DSM 19102 / 434/Bu)).